The primary structure comprises 310 residues: Homoserine kinase (310 aa).

ATP is bound at residue 85–95; sequence PKGLGLGSSGA.

This sequence belongs to the GHMP kinase family. Homoserine kinase subfamily.

It is found in the cytoplasm. The enzyme catalyses L-homoserine + ATP = O-phospho-L-homoserine + ADP + H(+). It functions in the pathway amino-acid biosynthesis; L-threonine biosynthesis; L-threonine from L-aspartate: step 4/5. Functionally, catalyzes the ATP-dependent phosphorylation of L-homoserine to L-homoserine phosphate. The chain is Homoserine kinase from Thermoplasma acidophilum (strain ATCC 25905 / DSM 1728 / JCM 9062 / NBRC 15155 / AMRC-C165).